The primary structure comprises 212 residues: uncharacterized protein (212 aa).

Residues G53, E74, and D97 each contribute to the S-adenosyl-L-methionine site.

Belongs to the methyltransferase superfamily. YrrT family.

Its function is as follows. Could be a S-adenosyl-L-methionine-dependent methyltransferase. This is an uncharacterized protein from Bacillus cereus (strain ATCC 10987 / NRS 248).